Here is a 165-residue protein sequence, read N- to C-terminus: uncharacterized protein (165 aa).

Helical transmembrane passes span 30–50, 65–85, 86–106, 108–128, and 131–151; these read GWEL…AAGG, GMVW…VSGL, SAFW…VWQG, FWLL…FASG, and WTVT…SEYG.

To E.coli YcdZ.

It localises to the cell membrane. This is an uncharacterized protein from Escherichia coli (strain K12).